The chain runs to 128 residues: Small ribosomal subunit protein uS8c (128 aa).

The protein belongs to the universal ribosomal protein uS8 family. Part of the 30S ribosomal subunit.

The protein localises to the plastid. It is found in the chloroplast. Its function is as follows. One of the primary rRNA binding proteins, it binds directly to 16S rRNA central domain where it helps coordinate assembly of the platform of the 30S subunit. The protein is Small ribosomal subunit protein uS8c (rps8) of Welwitschia mirabilis (Tree tumbo).